We begin with the raw amino-acid sequence, 267 residues long: Mediator of RNA polymerase II transcription subunit 8 (267 aa).

2 coiled-coil regions span residues 1 to 26 (MQRE…KNSL) and 116 to 160 (DVEE…EERE). Residues 190-267 (GLSNRRPPGQ…KSASMHPYQR (78 aa)) are disordered. Positions 227 to 245 (PPNQQQQHMAGVSMSQGSQ) are enriched in polar residues.

The protein belongs to the Mediator complex subunit 8 family. In terms of assembly, component of the Mediator complex. May be part of a multisubunit E3 ubiquitin-protein ligase complex.

It is found in the nucleus. It participates in protein modification; protein ubiquitination. Component of the Mediator complex, a coactivator involved in the regulated transcription of nearly all RNA polymerase II-dependent genes. Mediator functions as a bridge to convey information from gene-specific regulatory proteins to the basal RNA polymerase II transcription machinery. Mediator is recruited to promoters by direct interactions with regulatory proteins and serves as a scaffold for the assembly of a functional preinitiation complex with RNA polymerase II and the general transcription factors. May play a role as a target recruitment subunit in E3 ubiquitin-protein ligase complexes and thus in ubiquitination and subsequent proteasomal degradation of target proteins. This is Mediator of RNA polymerase II transcription subunit 8 (med8) from Xenopus tropicalis (Western clawed frog).